Here is a 237-residue protein sequence, read N- to C-terminus: Ribosomal RNA small subunit methyltransferase G (237 aa).

S-adenosyl-L-methionine-binding positions include G78, F83, 129-130, and R148; that span reads AE.

The protein belongs to the methyltransferase superfamily. RNA methyltransferase RsmG family.

Its subcellular location is the cytoplasm. Functionally, specifically methylates the N7 position of a guanine in 16S rRNA. The chain is Ribosomal RNA small subunit methyltransferase G from Streptococcus pyogenes serotype M2 (strain MGAS10270).